The primary structure comprises 383 residues: Acyl-CoA dehydrogenase, short-chain specific (383 aa).

Catalysis depends on glutamate 367, which acts as the Proton acceptor.

This sequence belongs to the acyl-CoA dehydrogenase family. As to quaternary structure, homotetramer. It depends on FAD as a cofactor.

It catalyses the reaction butanoyl-CoA + oxidized [electron-transfer flavoprotein] + H(+) = (2E)-butenoyl-CoA + reduced [electron-transfer flavoprotein]. It carries out the reaction a short-chain 2,3-saturated fatty acyl-CoA + oxidized [electron-transfer flavoprotein] + H(+) = a short-chain (2E)-enoyl-CoA + reduced [electron-transfer flavoprotein]. In terms of biological role, has an optimum specificity for 4-carbon length fatty acyl-CoAs. The chain is Acyl-CoA dehydrogenase, short-chain specific from Megasphaera elsdenii.